Here is a 351-residue protein sequence, read N- to C-terminus: MKAAIALSLLGCVFGFSGKAFAGDAWGPCTPADGTTYHYNVDVDVGIPDAAKNVAGTVLPDVLNWSNGQNVSLICECPDSYKNEKDTLVQGVSMLPPSGRTVDSMKYYTLTEELEVATNIRISTSVYGFVPFKNQQALQTTGCNKVITTPYMGGAGLLSFAITKPFIGDSVIPLTLIAELYASKTNKDYGTIPISSVSIQGRVTVTQDCEIKPGTVLDVPFGEFPSSAFKNRQGQMPEGATEQEINLSFDCNNISDGIKVALRLEGATNADDPRAVDMGNPDIGVLVKDSSGKILVPNDSSSTTLLNLSSLDSKTHRNAAIRLLALPISTTGKAPKGGTFEGVTTIYLEME.

The first 22 residues, methionine 1–alanine 22, serve as a signal peptide directing secretion.

Belongs to the fimbrial protein family.

It is found in the fimbrium. Functionally, part of the lpfABCC'DE fimbrial operon. LP fimbriae may participate in the interaction with eukaryotic cells by assisting in microcolony formation. This Escherichia coli O157:H7 protein is Probable minor fimbrial subunit LpfD (lpfD).